A 331-amino-acid chain; its full sequence is 4-hydroxythreonine-4-phosphate dehydrogenase (331 aa).

Positions 137 and 138 each coordinate substrate. Residues His-167, His-212, and His-267 each contribute to the a divalent metal cation site. 3 residues coordinate substrate: Lys-275, Asn-284, and Arg-293.

Belongs to the PdxA family. Homodimer. Zn(2+) serves as cofactor. Requires Mg(2+) as cofactor. It depends on Co(2+) as a cofactor.

It is found in the cytoplasm. It catalyses the reaction 4-(phosphooxy)-L-threonine + NAD(+) = 3-amino-2-oxopropyl phosphate + CO2 + NADH. The protein operates within cofactor biosynthesis; pyridoxine 5'-phosphate biosynthesis; pyridoxine 5'-phosphate from D-erythrose 4-phosphate: step 4/5. Functionally, catalyzes the NAD(P)-dependent oxidation of 4-(phosphooxy)-L-threonine (HTP) into 2-amino-3-oxo-4-(phosphooxy)butyric acid which spontaneously decarboxylates to form 3-amino-2-oxopropyl phosphate (AHAP). This Yersinia pestis bv. Antiqua (strain Angola) protein is 4-hydroxythreonine-4-phosphate dehydrogenase.